Here is a 138-residue protein sequence, read N- to C-terminus: Methane monooxygenase regulatory protein B (138 aa).

The protein belongs to the TmoD/XamoD family. As to quaternary structure, the soluble methane monooxygenase (sMMO) consists of four components A/MMOH (composed of alpha/MmoX, beta/MmoY and gamma/MmoZ), B/MMOB (MmoB), C/MMOR (MmoC) and D/MMOD (MmoD).

The B protein acts as a regulator of electron flow through the soluble mmo complex, switching the enzyme from an oxidase to a hydroxylase in the presence of the substrate. The polypeptide is Methane monooxygenase regulatory protein B (mmoB) (Methylosinus trichosporium).